Reading from the N-terminus, the 164-residue chain is Protein-export protein SecB (164 aa).

This sequence belongs to the SecB family. In terms of assembly, homotetramer, a dimer of dimers. One homotetramer interacts with 1 SecA dimer.

It is found in the cytoplasm. In terms of biological role, one of the proteins required for the normal export of preproteins out of the cell cytoplasm. It is a molecular chaperone that binds to a subset of precursor proteins, maintaining them in a translocation-competent state. It also specifically binds to its receptor SecA. The sequence is that of Protein-export protein SecB from Burkholderia orbicola (strain MC0-3).